The chain runs to 500 residues: uncharacterized protein (500 aa).

An N-terminal signal peptide occupies residues 1–20 (MHSIIFKAAVALLGVSTAAG). Asn-43 is a glycosylation site (N-linked (GlcNAc...) asparagine). Positions 60–232 (TALRPDCIIA…TAFTVKTHTQ (173 aa)) constitute an FAD-binding PCMH-type domain. His-98 bears the Pros-8alpha-FAD histidine mark. N-linked (GlcNAc...) asparagine glycosylation is found at Asn-194, Asn-201, Asn-246, Asn-299, and Asn-414.

This sequence belongs to the oxygen-dependent FAD-linked oxidoreductase family. Requires FAD as cofactor.

Its subcellular location is the secreted. This is an uncharacterized protein from Arthroderma benhamiae (strain ATCC MYA-4681 / CBS 112371) (Trichophyton mentagrophytes).